The sequence spans 236 residues: uncharacterized protein (236 aa).

This is an uncharacterized protein from Sus scrofa (Pig).